Consider the following 276-residue polypeptide: NH(3)-dependent NAD(+) synthetase (276 aa).

46–53 contacts ATP; it reads GISGGQDS. A Mg(2+)-binding site is contributed by Asp52. Arg141 contributes to the deamido-NAD(+) binding site. Thr161 is an ATP binding site. Glu166 provides a ligand contact to Mg(2+). The deamido-NAD(+) site is built by Lys174 and Asp181. Positions 190 and 212 each coordinate ATP. 261–262 contributes to the deamido-NAD(+) binding site; that stretch reads HK.

The protein belongs to the NAD synthetase family. Homodimer.

It carries out the reaction deamido-NAD(+) + NH4(+) + ATP = AMP + diphosphate + NAD(+) + H(+). It functions in the pathway cofactor biosynthesis; NAD(+) biosynthesis; NAD(+) from deamido-NAD(+) (ammonia route): step 1/1. Functionally, catalyzes the ATP-dependent amidation of deamido-NAD to form NAD. Uses ammonia as a nitrogen source. The chain is NH(3)-dependent NAD(+) synthetase from Limosilactobacillus fermentum (strain NBRC 3956 / LMG 18251) (Lactobacillus fermentum).